Reading from the N-terminus, the 129-residue chain is Histone H2A.J (129 aa).

A disordered region spans residues 1–22; it reads MSGRGKQGGKVRAKAKSRSSRA. N6-acetyllysine occurs at positions 6 and 10. Basic residues predominate over residues 7–19; that stretch reads QGGKVRAKAKSRS. Lysine 10 carries the post-translational modification N6-lactoyllysine; alternate. Glutamine 105 is subject to N5-methylglutamine. Threonine 121 carries the phosphothreonine; by DCAF1 modification.

The protein belongs to the histone H2A family. As to quaternary structure, the nucleosome is a histone octamer containing two molecules each of H2A, H2B, H3 and H4 assembled in one H3-H4 heterotetramer and two H2A-H2B heterodimers. The octamer wraps approximately 147 bp of DNA. In terms of processing, glutamine methylation at Gln-105 (H2AQ104me) by FBL is specifically dedicated to polymerase I. It is present at 35S ribosomal DNA locus and impairs binding of the FACT complex. Post-translationally, monoubiquitination of Lys-120 (H2AXK119ub) gives a specific tag for epigenetic transcriptional repression. Following DNA double-strand breaks (DSBs), it is ubiquitinated through 'Lys-63' linkage of ubiquitin moieties. Phosphorylation on Ser-2 (H2AS1ph) is enhanced during mitosis. Phosphorylation on Ser-2 by RPS6KA5/MSK1 directly represses transcription. Acetylation of H3 inhibits Ser-2 phosphorylation by RPS6KA5/MSK1. Phosphorylation at Thr-121 (H2AT120ph) by DCAF1 is present in the regulatory region of many tumor suppresor genes and down-regulates their transcription.

The protein resides in the nucleus. Its subcellular location is the chromosome. In terms of biological role, core component of nucleosome. Nucleosomes wrap and compact DNA into chromatin, limiting DNA accessibility to the cellular machineries which require DNA as a template. Histones thereby play a central role in transcription regulation, DNA repair, DNA replication and chromosomal stability. DNA accessibility is regulated via a complex set of post-translational modifications of histones, also called histone code, and nucleosome remodeling. This chain is Histone H2A.J, found in Bos taurus (Bovine).